The sequence spans 870 residues: Rho GTPase-activating protein 7 (870 aa).

Residues 18-125 (TVFKSGPLFI…WKTALEQALA (108 aa)) enclose the PH domain. The 201-residue stretch at 167-367 (LALEDIDGSP…VLLEDYGSIF (201 aa)) folds into the Rho-GAP domain. Disordered stretches follow at residues 378-432 (STES…SGCT) and 446-465 (DSDIESPRDTNGPRCNSNIR). The span at 407 to 417 (NEVEPVTDDDN) shows a compositional bias: acidic residues. A coiled-coil region spans residues 569 to 693 (GEDELAIQRL…HQLNQQRQTH (125 aa)). A disordered region spans residues 736-793 (HEENVLGAEWRNSKGAGSFGVGNSRQPSRKQIPESTNTTDSKISEESGKISVDKLSSI). Residues 777–787 (KISEESGKISV) show a composition bias toward basic and acidic residues.

Functionally, acts as a GTPase activator for the Rac-type GTPase by converting it to an inactive GDP-bound state. The chain is Rho GTPase-activating protein 7 (ROPGAP7) from Arabidopsis thaliana (Mouse-ear cress).